Here is a 145-residue protein sequence, read N- to C-terminus: MRGLLQRVRGARVEVAGEVVGAIDQGLLVLVAVEPEDSREQADKLLHKLLNYRVFSDEQGKMNLSLKDVGGGLLLVSQFTLAADTRNGMRPSFSTAAPPALGAELFDYLLQQAKAQHADVASGRFGADMQVHLVNDGPVTFMLQI.

Residues 137 to 138 (GP) carry the Gly-cisPro motif, important for rejection of L-amino acids motif.

It belongs to the DTD family. Homodimer.

It is found in the cytoplasm. It catalyses the reaction glycyl-tRNA(Ala) + H2O = tRNA(Ala) + glycine + H(+). The enzyme catalyses a D-aminoacyl-tRNA + H2O = a tRNA + a D-alpha-amino acid + H(+). Functionally, an aminoacyl-tRNA editing enzyme that deacylates mischarged D-aminoacyl-tRNAs. Also deacylates mischarged glycyl-tRNA(Ala), protecting cells against glycine mischarging by AlaRS. Acts via tRNA-based rather than protein-based catalysis; rejects L-amino acids rather than detecting D-amino acids in the active site. By recycling D-aminoacyl-tRNA to D-amino acids and free tRNA molecules, this enzyme counteracts the toxicity associated with the formation of D-aminoacyl-tRNA entities in vivo and helps enforce protein L-homochirality. This chain is D-aminoacyl-tRNA deacylase, found in Pseudomonas putida (strain ATCC 700007 / DSM 6899 / JCM 31910 / BCRC 17059 / LMG 24140 / F1).